The following is a 137-amino-acid chain: Glycine cleavage system H protein (137 aa).

Residues 36–118 (PAIIGITEYA…YGEGWLLKVE (83 aa)) enclose the Lipoyl-binding domain. The residue at position 77 (lysine 77) is an N6-lipoyllysine.

Belongs to the GcvH family. The glycine cleavage system is composed of four proteins: P, T, L and H. (R)-lipoate is required as a cofactor.

Functionally, the glycine cleavage system catalyzes the degradation of glycine. The H protein shuttles the methylamine group of glycine from the P protein to the T protein. In Bifidobacterium longum (strain NCC 2705), this protein is Glycine cleavage system H protein.